Consider the following 676-residue polypeptide: Intraflagellar transport protein 81 homolog (676 aa).

Residue Ser-2 is modified to N-acetylserine. Residues 2 to 121 (SDQIKFIMDS…LKKRAYLARF (120 aa)) are CH (calponin-homology)-like region. Thr-61 is modified (phosphothreonine). 4 coiled-coil regions span residues 132–258 (LQDE…ADAK), 306–389 (HSDL…FDGT), 416–456 (QIIA…KGIS), and 490–622 (VKKL…REKQ).

It belongs to the IFT81 family. In terms of assembly, component of the IFT complex B, at least composed of IFT20, IFT22, IFT25, IFT27, IFT46, IFT52, TRAF3IP1/IFT54, IFT57, IFT74, IFT80, IFT81, and IFT88. Interacts with IFT74; the interaction is direct: within the IFT complex B, IFT74 and IFT81 mediate the transport of tubulin within the cilium. Interacts with tubulin; the interaction is direct. Interacts with IFT57 and IFT70B. Interacts with RABL2/RABL2A; binding is equal in the presence of GTP or GDP. Interacts with IFT88. Interacts (via the IFT74/IFT81 heterodimer) with RABL2B. Interacts with CFAP61. As to expression, highly expressed in testis, moderately in ovary, heart, liver, skeletal muscle, kidney and pancreas, low in prostate, brain, placenta and lung and not detected in spleen, thymus, small intestine and colon. Isoform CDV-1R is abundantly expressed in testis.

The protein resides in the cell projection. It is found in the cilium. It localises to the cytoplasm. The protein localises to the cytoskeleton. Its subcellular location is the cilium basal body. Component of the intraflagellar transport (IFT) complex B: together with IFT74, forms a tubulin-binding module that specifically mediates transport of tubulin within the cilium. Binds tubulin via its CH (calponin-homology)-like region. Required for ciliogenesis. Required for proper regulation of SHH signaling. Plays an important role during spermatogenesis by modulating the assembly and elongation of the sperm flagella. The polypeptide is Intraflagellar transport protein 81 homolog (IFT81) (Homo sapiens (Human)).